We begin with the raw amino-acid sequence, 611 residues long: MCGIVGGVSKTDLVPMILEGLQRLEYRGYDSAGLAILGADADLLRVRSVGRVAELTAAVVERGLQGQVGIGHTRWATHGGVRECNAHPMISHEQIAVVHNGIIENFHALRAHLEAAGYTFTSETDTEVIAHLVHHYRQTAPDLFAATRRAVGDLRGAYAIAVISSGDPETVCVARMGCPLLLGVADDGHYFASDVAALLPVTRRVLYLEDGDVAMLQRQTLRITDQAGASRQREEHWSQLSAAAVDLGPYRHFMQKEIHEQPRAVADTLEGALNSQLDLTDLWGDGAAAMFRDVDRVLFLASGTSHYATLVGRQWVESIVGIPAQAELGHEYRYRDSIPDPRQLVVTLSQSGETLDTFEALRRAKDLGHTRTLAICNVAESAIPRASALRFLTRAGPEIGVASTKAFTTQLAALYLLALSLAKAPGASERCAAGGSPGRLRQLPGSVQHALNLEPQIQGWAARFASKDHALFLGRGLHYPIALEGALKLKEISYIHAEAYPAGELKHGPLALVDRDMPVVVIAPNDRLLEKLAANMQEVHARGGELYVFADSDSHFNASAGVHVMRLPRHAGLLSPIVHAIPVQLLAYHAALVKGTDVDRPRNLAKSVTVE.

C2 serves as the catalytic Nucleophile; for GATase activity. Residues 2–219 form the Glutamine amidotransferase type-2 domain; that stretch reads CGIVGGVSKT…DGDVAMLQRQ (218 aa). SIS domains follow at residues 287–427 and 460–601; these read AAAM…APGA and WAAR…VDRP. K606 (for Fru-6P isomerization activity) is an active-site residue.

In terms of assembly, homodimer.

It localises to the cytoplasm. The catalysed reaction is D-fructose 6-phosphate + L-glutamine = D-glucosamine 6-phosphate + L-glutamate. Its function is as follows. Catalyzes the first step in hexosamine metabolism, converting fructose-6P into glucosamine-6P using glutamine as a nitrogen source. The protein is Glutamine--fructose-6-phosphate aminotransferase [isomerizing] of Acidithiobacillus ferridurans.